The chain runs to 443 residues: Probable D-serine dehydratase (443 aa).

Position 118 is an N6-(pyridoxal phosphate)lysine (K118).

Belongs to the serine/threonine dehydratase family. DsdA subfamily. It depends on pyridoxal 5'-phosphate as a cofactor.

It catalyses the reaction D-serine = pyruvate + NH4(+). The sequence is that of Probable D-serine dehydratase from Vibrio campbellii (strain ATCC BAA-1116).